Consider the following 369-residue polypeptide: Phosphoserine aminotransferase (369 aa).

R42 contacts L-glutamate. 4 residues coordinate pyridoxal 5'-phosphate: W101, T152, D176, and Q199. K200 carries the post-translational modification N6-(pyridoxal phosphate)lysine. Pyridoxal 5'-phosphate is bound at residue 241-242; sequence NT.

The protein belongs to the class-V pyridoxal-phosphate-dependent aminotransferase family. SerC subfamily. As to quaternary structure, homodimer. The cofactor is pyridoxal 5'-phosphate.

The protein localises to the cytoplasm. The catalysed reaction is O-phospho-L-serine + 2-oxoglutarate = 3-phosphooxypyruvate + L-glutamate. The enzyme catalyses 4-(phosphooxy)-L-threonine + 2-oxoglutarate = (R)-3-hydroxy-2-oxo-4-phosphooxybutanoate + L-glutamate. Its pathway is amino-acid biosynthesis; L-serine biosynthesis; L-serine from 3-phospho-D-glycerate: step 2/3. It participates in cofactor biosynthesis; pyridoxine 5'-phosphate biosynthesis; pyridoxine 5'-phosphate from D-erythrose 4-phosphate: step 3/5. Functionally, catalyzes the reversible conversion of 3-phosphohydroxypyruvate to phosphoserine and of 3-hydroxy-2-oxo-4-phosphonooxybutanoate to phosphohydroxythreonine. This is Phosphoserine aminotransferase from Delftia acidovorans (strain DSM 14801 / SPH-1).